The following is a 201-amino-acid chain: Large ribosomal subunit protein uL4 (201 aa).

The tract at residues 45-72 (AQKTRAEVTGSGKKPWRQKGTGRARAGS) is disordered.

The protein belongs to the universal ribosomal protein uL4 family. In terms of assembly, part of the 50S ribosomal subunit.

One of the primary rRNA binding proteins, this protein initially binds near the 5'-end of the 23S rRNA. It is important during the early stages of 50S assembly. It makes multiple contacts with different domains of the 23S rRNA in the assembled 50S subunit and ribosome. Its function is as follows. Forms part of the polypeptide exit tunnel. The protein is Large ribosomal subunit protein uL4 of Shewanella baltica (strain OS223).